The chain runs to 393 residues: Staphopain B (393 aa).

An N-terminal signal peptide occupies residues 1 to 36; the sequence is MNSSCKTRVFNIISIIMVSMLILSLGAFANNNKAKA. Residues 37–219 constitute a propeptide that is removed on maturation; that stretch reads DSHSKQLEIN…KVEENEAIQE (183 aa). Active-site residues include cysteine 243, histidine 340, and asparagine 360.

Belongs to the peptidase C47 family. In the cytoplasm, prematurely activated/folded SspB forms a stable non-covalent complex with SspC. In terms of processing, proteolytically cleaved by staphylococcal serine protease (SspA).

Its subcellular location is the secreted. Prematurely activated/folded staphopain B is inhibited by staphostatin B (SspC), which is probably required to protect staphylococcal cytoplasmic proteins from degradation by SspB. Functionally, cysteine protease that plays an important role in the inhibition of host innate immune response. Degrades host elastin, fibrogen, fibronectin and kininogen. Blocks phagocytosis of opsonised S.aureus by neutrophils and monocytes by inducing their death in a proteolytic activity-dependent manner. Decreases surface expression of the 'don't eat me' signal CD31 on neutrophils. Cleaves host galectin-3/LGALS3, thereby inhibiting the neutrophil-activating ability of the lectin. This Staphylococcus aureus protein is Staphopain B (sspB).